The chain runs to 274 residues: uncharacterized protein (274 aa).

Positions 253 to 274 are disordered; that stretch reads QTGDVRTTEGTALTDDTTKRNI.

This is an uncharacterized protein from Deinococcus radiodurans (strain ATCC 13939 / DSM 20539 / JCM 16871 / CCUG 27074 / LMG 4051 / NBRC 15346 / NCIMB 9279 / VKM B-1422 / R1).